The sequence spans 140 residues: Large ribosomal subunit protein bL17 (140 aa).

The protein belongs to the bacterial ribosomal protein bL17 family. In terms of assembly, part of the 50S ribosomal subunit. Contacts protein L32.

The protein is Large ribosomal subunit protein bL17 of Rhizobium leguminosarum bv. trifolii (strain WSM2304).